The sequence spans 277 residues: Diaminopimelate epimerase (277 aa).

3 residues coordinate substrate: Asn13, Gln46, and Asn66. Cys75 functions as the Proton donor in the catalytic mechanism. Substrate-binding positions include 76–77 (GN), Asn160, Asn193, and 211–212 (ER). Residue Cys220 is the Proton acceptor of the active site. Position 221-222 (221-222 (GS)) interacts with substrate.

Belongs to the diaminopimelate epimerase family. In terms of assembly, homodimer.

It localises to the cytoplasm. It carries out the reaction (2S,6S)-2,6-diaminopimelate = meso-2,6-diaminopimelate. It participates in amino-acid biosynthesis; L-lysine biosynthesis via DAP pathway; DL-2,6-diaminopimelate from LL-2,6-diaminopimelate: step 1/1. Its function is as follows. Catalyzes the stereoinversion of LL-2,6-diaminopimelate (L,L-DAP) to meso-diaminopimelate (meso-DAP), a precursor of L-lysine and an essential component of the bacterial peptidoglycan. The sequence is that of Diaminopimelate epimerase from Legionella pneumophila subsp. pneumophila (strain Philadelphia 1 / ATCC 33152 / DSM 7513).